A 209-amino-acid polypeptide reads, in one-letter code: Uracil phosphoribosyltransferase (209 aa).

5-phospho-alpha-D-ribose 1-diphosphate contacts are provided by residues Arg-79, Arg-104, and Asp-131–Ser-139. Residues Ile-194 and Gly-199 to Ala-201 each bind uracil. Asp-200 provides a ligand contact to 5-phospho-alpha-D-ribose 1-diphosphate.

This sequence belongs to the UPRTase family. The cofactor is Mg(2+).

It carries out the reaction UMP + diphosphate = 5-phospho-alpha-D-ribose 1-diphosphate + uracil. The protein operates within pyrimidine metabolism; UMP biosynthesis via salvage pathway; UMP from uracil: step 1/1. Allosterically activated by GTP. Catalyzes the conversion of uracil and 5-phospho-alpha-D-ribose 1-diphosphate (PRPP) to UMP and diphosphate. The chain is Uracil phosphoribosyltransferase from Staphylococcus carnosus (strain TM300).